A 612-amino-acid chain; its full sequence is Adherence factor (612 aa).

Low complexity-rich tracts occupy residues 1–18 (MSSF…NLSS), 47–68 (SSMM…QQQQ), 94–106 (LQTQ…SATT), 115–141 (YNQQ…NNMQ), 182–203 (QSAQ…QPRS), and 218–228 (SRQVSGSGRST). Disordered regions lie at residues 1–20 (MSSF…SSFQ), 46–68 (ASSM…QQQQ), 94–143 (LQTQ…MQFF), 179–273 (PQLQ…NNNK), 443–480 (KEKK…NTNN), 497–527 (SQLM…LSNN), and 546–612 (SQEQ…KQFY). Over residues 230-240 (AKKQSAITSGS) the composition is skewed to polar residues. A compositionally biased stretch (low complexity) spans 254 to 272 (TSVANSTSTTTMTTTNNNN). Residues 443–457 (KEKKLTEKTIEQREQ) are compositionally biased toward basic and acidic residues. Polar residues-rich tracts occupy residues 465-480 (ANHS…NTNN) and 497-512 (SQLM…ATKI). Residues 555–571 (NQHHHNHQQHPLIHHHQ) are compositionally biased toward basic residues. Low complexity predominate over residues 585–606 (PSTIPTSSLSIQQQQQQQQQQL).

Its function is as follows. Surface antigen mediating adhesion and aggregation in S.cerevisiae. In Candida albicans (strain SC5314 / ATCC MYA-2876) (Yeast), this protein is Adherence factor (ADF1).